The chain runs to 518 residues: Light-independent protochlorophyllide reductase subunit B (518 aa).

Residue Asp36 coordinates [4Fe-4S] cluster. The active-site Proton donor is the Asp285. 420-421 (GL) contacts substrate.

The protein belongs to the ChlB/BchB/BchZ family. Protochlorophyllide reductase is composed of three subunits; BchL, BchN and BchB. Forms a heterotetramer of two BchB and two BchN subunits. [4Fe-4S] cluster is required as a cofactor.

The enzyme catalyses chlorophyllide a + oxidized 2[4Fe-4S]-[ferredoxin] + 2 ADP + 2 phosphate = protochlorophyllide a + reduced 2[4Fe-4S]-[ferredoxin] + 2 ATP + 2 H2O. Its pathway is porphyrin-containing compound metabolism; bacteriochlorophyll biosynthesis (light-independent). Its function is as follows. Component of the dark-operative protochlorophyllide reductase (DPOR) that uses Mg-ATP and reduced ferredoxin to reduce ring D of protochlorophyllide (Pchlide) to form chlorophyllide a (Chlide). This reaction is light-independent. The NB-protein (BchN-BchB) is the catalytic component of the complex. In Bradyrhizobium sp. (strain ORS 278), this protein is Light-independent protochlorophyllide reductase subunit B.